A 418-amino-acid chain; its full sequence is ATP-dependent Clp protease ATP-binding subunit ClpX (418 aa).

One can recognise a ClpX-type ZB domain in the interval 1–54; the sequence is MTRKDDESDQFFCSFCGKNQKEVKKLIAGPSVYICNECVSLCEEIIEDEDKESL. 4 residues coordinate Zn(2+): cysteine 13, cysteine 16, cysteine 35, and cysteine 38. 120 to 127 lines the ATP pocket; that stretch reads PTGCGKTL.

Belongs to the ClpX chaperone family. Component of the ClpX-ClpP complex. Forms a hexameric ring that, in the presence of ATP, binds to fourteen ClpP subunits assembled into a disk-like structure with a central cavity, resembling the structure of eukaryotic proteasomes.

ATP-dependent specificity component of the Clp protease. It directs the protease to specific substrates. Can perform chaperone functions in the absence of ClpP. The polypeptide is ATP-dependent Clp protease ATP-binding subunit ClpX (Desulforapulum autotrophicum (strain ATCC 43914 / DSM 3382 / VKM B-1955 / HRM2) (Desulfobacterium autotrophicum)).